The sequence spans 103 residues: Somatostatin-2 (103 aa).

An N-terminal signal peptide occupies residues 1–21 (MLGSAGTLLLLLLAWGARALS). A propeptide spanning residues 22–87 (QPDDNRITTG…VKFPRLSLRE (66 aa)) is cleaved from the precursor. Residues cysteine 92 and cysteine 103 are joined by a disulfide bond.

The protein belongs to the somatostatin family.

The protein resides in the secreted. Somatostatin inhibits the release of somatotropin. This is Somatostatin-2 (sst2) from Pelophylax ridibundus (Marsh frog).